The sequence spans 142 residues: 3-hydroxyacyl-[acyl-carrier-protein] dehydratase FabZ (142 aa).

Residue His48 is part of the active site.

Belongs to the thioester dehydratase family. FabZ subfamily.

It is found in the cytoplasm. The enzyme catalyses a (3R)-hydroxyacyl-[ACP] = a (2E)-enoyl-[ACP] + H2O. Involved in unsaturated fatty acids biosynthesis. Catalyzes the dehydration of short chain beta-hydroxyacyl-ACPs and long chain saturated and unsaturated beta-hydroxyacyl-ACPs. In Natranaerobius thermophilus (strain ATCC BAA-1301 / DSM 18059 / JW/NM-WN-LF), this protein is 3-hydroxyacyl-[acyl-carrier-protein] dehydratase FabZ.